Here is a 256-residue protein sequence, read N- to C-terminus: uncharacterized protein (256 aa).

Positions 1–24 (MIKRVNKLVLGISLLFLVISIAAG) are cleaved as a signal peptide. Residue Cys25 is the site of N-palmitoyl cysteine attachment. Cys25 is lipidated: S-diacylglycerol cysteine.

It belongs to the staphylococcal tandem lipoprotein family.

Its subcellular location is the cell membrane. This is an uncharacterized protein from Staphylococcus aureus.